A 526-amino-acid chain; its full sequence is Vitamin B6 transporter bsu1 (526 aa).

The disordered stretch occupies residues 1-53 (MASKIASLFSPSETASKDQHENVAEDLELGTASSQSDGIHETNSEYDEKKREE). Positions 38-53 (GIHETNSEYDEKKREE) are enriched in basic and acidic residues. Helical transmembrane passes span 81 to 101 (WSIVFMFCLMQIYVIWTSNGF), 118 to 138 (VATLCLSMNILGSGLGPMFLG), 147 to 167 (KPVYFCSIFVYTVFNISCALP), 173 to 192 (MIISHFIIGVAGSTALTNVA), 204 to 224 (AGVPMSLFVWACAGGAIGAPM), 238 to 257 (WLYYINIIVGGFFLIVILII), 314 to 330 (LYNFYAYGISYFFLTAI), 349 to 366 (YLSGFVASTLLFLYQPIQ), 387 to 407 (FTSALFITLLFPAGMFLFAFT), 413 to 432 (PWMSPIVGNSMVTVANGHNW), 444 to 461 (PLLSGSAVAAFTLPSFIG), and 480 to 501 (WAVATMAFISISIPFIIYTFYF).

It belongs to the major facilitator superfamily. CAR1 family.

The protein resides in the membrane. In terms of biological role, thiamine-regulated, high affinity import carrier of pyridoxine, pyridoxal and pyridoxamine. Also imports, but does not export, amiloride and so confers sensitivity. This Schizosaccharomyces pombe (strain 972 / ATCC 24843) (Fission yeast) protein is Vitamin B6 transporter bsu1 (bsu1).